Consider the following 334-residue polypeptide: ADP-L-glycero-D-manno-heptose-6-epimerase (334 aa).

NADP(+) is bound by residues 11 to 12 (FI), 32 to 33 (DN), Lys39, Lys54, 77 to 81 (QGACS), and Asn94. The Proton acceptor role is filled by Tyr141. Lys145 contributes to the NADP(+) binding site. Asn171 contacts substrate. NADP(+) is bound by residues Val172 and Lys180. Lys180 acts as the Proton acceptor in catalysis. Residues Arg182, His189, 203–206 (FGSN), Arg216, and Tyr295 each bind substrate.

The protein belongs to the NAD(P)-dependent epimerase/dehydratase family. HldD subfamily. As to quaternary structure, homopentamer. NADP(+) is required as a cofactor.

It carries out the reaction ADP-D-glycero-beta-D-manno-heptose = ADP-L-glycero-beta-D-manno-heptose. Its pathway is nucleotide-sugar biosynthesis; ADP-L-glycero-beta-D-manno-heptose biosynthesis; ADP-L-glycero-beta-D-manno-heptose from D-glycero-beta-D-manno-heptose 7-phosphate: step 4/4. It functions in the pathway bacterial outer membrane biogenesis; LOS core biosynthesis. Catalyzes the interconversion between ADP-D-glycero-beta-D-manno-heptose and ADP-L-glycero-beta-D-manno-heptose via an epimerization at carbon 6 of the heptose. This chain is ADP-L-glycero-D-manno-heptose-6-epimerase, found in Neisseria meningitidis serogroup A / serotype 4A (strain DSM 15465 / Z2491).